The chain runs to 508 residues: Cytochrome P450 monooxygenase orf4 (508 aa).

Cys447 is a heme binding site.

Belongs to the cytochrome P450 family. It depends on heme as a cofactor.

The protein operates within mycotoxin biosynthesis. Functionally, cytochrome P450 monooxygenase; part of the gene cluster that mediates the biosynthesis of brefeldin A (BFA), a protein transport inhibitor that shows antiviral, antifungal, and antitumor properties. The proposed biosynthesis of BFA involves formation of an acyclic polyketide chain that is differentially tailored throughout the backbone. The highly reducing polyketide synthase Bref-PKS is proposed to synthesize the precisely reduced octaketide precursor, which could then be directly offloaded by the thiohydrolase enzyme Bref-TH followed by a cytochrome P450 monooxygenase-mediated formation of the cyclopentane ring and macrocyclization to afford 7-deoxy BFA. Alternatively, the first ring annulation can also occur on the ACP-tethered intermediate before the thiohydrolase release and lactonization. The C7-hydroxylation by another cytochrome P450 monooxygenase is believed to be the final step in the process to obtain the final structure of BFA. In addition to the HRPKS Bref-PKS and the thiohydrolase Bref-TH, the brefeldin A biosynthesis cluster contains 4 cytochrome p450 monooxygenases (called orf3 to orf6), as well a the probable cluster-specific transcription regulator orf8. The sequence is that of Cytochrome P450 monooxygenase orf4 from Eupenicillium brefeldianum (Penicillium brefeldianum).